Here is a 3329-residue protein sequence, read N- to C-terminus: Breast cancer type 2 susceptibility protein homolog (3329 aa).

The interval 1–40 (MPVEYKRRPTFWEIFKARCSTADLGPISLNWFEELSSEAP) is interaction with PALB2. Disordered regions lie at residues 37–69 (SEAPPYNSEPPEESEYKPHGYEPQLFKTPQRNP) and 207–241 (EARSSVTPADSPATLKSCFSNHNESPQKNDRSVPS). Phosphoserine is present on residues serine 435 and serine 481. The interval 628-650 (PDSSDKKRCLPNDPEEPSLTNSF) is disordered. The interval 628–979 (PDSSDKKRCL…DKWSEFLDPV (352 aa)) is interaction with NPM1. The residue at position 735 (serine 735) is a Phosphoserine. A compositionally biased stretch (basic and acidic residues) spans 934–953 (EKSRNNIEQHQKGTEDKDFK). Residues 934–965 (EKSRNNIEQHQKGTEDKDFKSNSSLNMKSDGN) form a disordered region. Positions 954–965 (SNSSLNMKSDGN) are enriched in polar residues. BRCA2 repeat units follow at residues 981-1015 (NHNFGGSFRTASNKEIKLSEHNVKKSKMFFKDIEE) and 1192-1226 (NEMEFGGFCSALGTKLSVSNEALRKAMKLFSDIEN). Positions 982–2035 (HNFGGSFRTA…LHKVKGMLEE (1054 aa)) are interaction with RAD51. The disordered stretch occupies residues 1296–1340 (NTKHEDSYTSSQRNNLENSDGSMSSTSGPVYIHKGDSDLPADQGS). The span at 1303-1323 (YTSSQRNNLENSDGSMSSTSG) shows a compositional bias: polar residues. BRCA2 repeat units lie at residues 1394–1428 (IKEFNISFQTASGKNTRVSKESLNKSVNIFNRETD), 1491–1525 (KEPTLLSFHTASGKKVKIMQESLDKVKNLFDETQY), 1623–1657 (TEDSALAYYTEDSRKTCVRESSLSKGRKWLREQGD), 1924–1958 (PSRTYGIFSTASGKAIQVSDASLEKARQVFSEMDG), and 2004–2038 (NSSVFSGFSTAGGKLVTVSESALHKVKGMLEEFDL). Phosphoserine is present on serine 2048. A disordered region spans residues 2073 to 2099 (NSKLQKTYNDKSSLPSNYKESGSSGNT). Over residues 2074 to 2099 (SKLQKTYNDKSSLPSNYKESGSSGNT) the composition is skewed to polar residues. Residues 2219-2285 (KRGGVTVDAV…EPVTCGPFCS (67 aa)) form an interaction with HSF2BP region. An interaction with FANCD2 region spans residues 2298–2466 (TSPAQELLSK…SPKQLYIYGV (169 aa)). The segment at 2361–2393 (FHGDEHFNSKNVNLEGKNQKSTDGDREDGNDSH) is disordered. Positions 2377–2393 (KNQKSTDGDREDGNDSH) are enriched in basic and acidic residues. Residues 2402–2753 (MSSLQSARDL…QRVYPLQWVE (352 aa)) are interaction with SEM1. Residues 2603 to 2619 (AAKTLVLCISDIISPST) carry the Nuclear export signal; masked by interaction with SEM1 motif. Phosphoserine; by CDK1 and CDK2 is present on serine 3214. 2 disordered regions span residues 3221–3257 (FQPPRSCGTKYATPIKKEPSSPRRRTPFQKTSGVSLP) and 3273–3329 (QALT…AVES). Serine 3241 bears the Phosphoserine mark. Residues 3309 to 3329 (SRKESLRDCRGDSSEKLAVES) are compositionally biased toward basic and acidic residues.

As to quaternary structure, monomer and dimer. Interacts with RAD51; regulates RAD51 recruitment and function at sites of DNA repair. Interacts with SEM1, WDR16, USP11, DMC1, ROCK2 and NPM1. Interacts with both nonubiquitinated and monoubiquitinated FANCD2; this complex also includes XRCC3 and phosphorylated FANCG. Part of a BRCA complex containing BRCA1, BRCA2 and PALB2. Component of the homologous recombination repair (HR) complex composed of ERCC5/XPG, BRCA2, PALB2, DSS1 and RAD51. Within the complex, interacts with ERCC5/XPG and PALB2. Interacts directly with PALB2 which may serve as a scaffold for a HR complex containing PALB2, BRCA2, RAD51C, RAD51 and XRCC3. Interacts with BRCA1 only in the presence of PALB2 which serves as the bridging protein. Interacts with POLH; the interaction is direct. Interacts with the TREX-2 complex subunits PCID2 and SEM1. Interacts with HSF2BP and BRME1; the interaction with HSF2BP is direct and allows the formation of a ternary complex. The complex BRME1:HSF2BP:BRCA2 interacts with SPATA22, MEIOB and RAD51. Phosphorylated by ATM upon irradiation-induced DNA damage. Phosphorylation by CHEK1 and CHEK2 regulates interaction with RAD51. Phosphorylation at Ser-3291 by CDK1 and CDK2 is low in S phase when recombination is active, but increases as cells progress towards mitosis; this phosphorylation prevents homologous recombination-dependent repair during S phase and G2 by inhibiting RAD51 binding. In terms of processing, ubiquitinated in the absence of DNA damage; this does not lead to proteasomal degradation. In contrast, ubiquitination in response to DNA damage leads to proteasomal degradation. As to expression, widely expressed. Highest expression in cerebellum, testis, ileum, appendix, epididymis, ovary and mammary gland. No expression in lung.

The protein resides in the nucleus. The protein localises to the cytoplasm. Its subcellular location is the cytoskeleton. It is found in the microtubule organizing center. It localises to the centrosome. Its function is as follows. Involved in double-strand break repair and/or homologous recombination. Binds RAD51 and potentiates recombinational DNA repair by promoting assembly of RAD51 onto single-stranded DNA (ssDNA). Acts by targeting RAD51 to ssDNA over double-stranded DNA, enabling RAD51 to displace replication protein-A (RPA) from ssDNA and stabilizing RAD51-ssDNA filaments by blocking ATP hydrolysis. Part of a PALB2-scaffolded HR complex containing RAD51C and which is thought to play a role in DNA repair by HR. May participate in S phase checkpoint activation. Binds selectively to ssDNA, and to ssDNA in tailed duplexes and replication fork structures. May play a role in the extension step after strand invasion at replication-dependent DNA double-strand breaks; together with PALB2 is involved in both POLH localization at collapsed replication forks and DNA polymerization activity. In concert with NPM1, regulates centrosome duplication. Interacts with the TREX-2 complex (transcription and export complex 2) subunits PCID2 and SEM1, and is required to prevent R-loop-associated DNA damage and thus transcription-associated genomic instability, independently of its known role in homologous recombination. In Mus musculus (Mouse), this protein is Breast cancer type 2 susceptibility protein homolog.